The chain runs to 391 residues: Processive diacylglycerol beta-glucosyltransferase (391 aa).

Belongs to the glycosyltransferase 28 family. UgtP subfamily.

It is found in the cell membrane. The enzyme catalyses a 1,2-diacyl-3-O-(beta-D-glucopyranosyl)-sn-glycerol + UDP-alpha-D-glucose = a 1,2-diacyl-3-O-(beta-D-Glc-(1-&gt;6)-beta-D-Glc)-sn-glycerol + UDP + H(+). The catalysed reaction is a 1,2-diacyl-sn-glycerol + UDP-alpha-D-glucose = a 1,2-diacyl-3-O-(beta-D-glucopyranosyl)-sn-glycerol + UDP + H(+). Its pathway is glycolipid metabolism; diglucosyl-diacylglycerol biosynthesis. Its function is as follows. Processive glucosyltransferase involved in the biosynthesis of both the bilayer- and non-bilayer-forming membrane glucolipids. Is able to successively transfer two glucosyl residues to diacylglycerol (DAG), thereby catalyzing the formation of beta-monoglucosyl-DAG (3-O-(beta-D-glucopyranosyl)-1,2-diacyl-sn-glycerol) and beta-diglucosyl-DAG (3-O-(beta-D-glucopyranosyl-beta-(1-&gt;6)-D-glucopyranosyl)-1,2-diacyl-sn-glycerol). Beta-diglucosyl-DAG is the predominant glycolipid found in Bacillales and is also used as a membrane anchor for lipoteichoic acid (LTA). The sequence is that of Processive diacylglycerol beta-glucosyltransferase from Staphylococcus aureus (strain MRSA252).